Reading from the N-terminus, the 194-residue chain is Holliday junction branch migration complex subunit RuvA (194 aa).

The interval Met1–Gly64 is domain I. The tract at residues Ser65 to Ala141 is domain II. Positions Ala141–Asn144 are flexible linker. Residues Pro145–Thr194 are domain III.

It belongs to the RuvA family. In terms of assembly, homotetramer. Forms an RuvA(8)-RuvB(12)-Holliday junction (HJ) complex. HJ DNA is sandwiched between 2 RuvA tetramers; dsDNA enters through RuvA and exits via RuvB. An RuvB hexamer assembles on each DNA strand where it exits the tetramer. Each RuvB hexamer is contacted by two RuvA subunits (via domain III) on 2 adjacent RuvB subunits; this complex drives branch migration. In the full resolvosome a probable DNA-RuvA(4)-RuvB(12)-RuvC(2) complex forms which resolves the HJ.

It localises to the cytoplasm. Its function is as follows. The RuvA-RuvB-RuvC complex processes Holliday junction (HJ) DNA during genetic recombination and DNA repair, while the RuvA-RuvB complex plays an important role in the rescue of blocked DNA replication forks via replication fork reversal (RFR). RuvA specifically binds to HJ cruciform DNA, conferring on it an open structure. The RuvB hexamer acts as an ATP-dependent pump, pulling dsDNA into and through the RuvAB complex. HJ branch migration allows RuvC to scan DNA until it finds its consensus sequence, where it cleaves and resolves the cruciform DNA. This is Holliday junction branch migration complex subunit RuvA from Methylobacillus flagellatus (strain ATCC 51484 / DSM 6875 / VKM B-1610 / KT).